A 138-amino-acid chain; its full sequence is Transcription antitermination protein NusB (138 aa).

The protein belongs to the NusB family.

In terms of biological role, involved in transcription antitermination. Required for transcription of ribosomal RNA (rRNA) genes. Binds specifically to the boxA antiterminator sequence of the ribosomal RNA (rrn) operons. This Alkaliphilus oremlandii (strain OhILAs) (Clostridium oremlandii (strain OhILAs)) protein is Transcription antitermination protein NusB.